Consider the following 610-residue polypeptide: Glutamine--fructose-6-phosphate aminotransferase [isomerizing] (610 aa).

Residue cysteine 2 is the Nucleophile; for GATase activity of the active site. The 220-residue stretch at 2–221 folds into the Glutamine amidotransferase type-2 domain; sequence CGIVGAVAQR…DGDVVDLQLA (220 aa). SIS domains are found at residues 286–426 and 459–600; these read AYKV…TRGR and WADR…VDKP. Lysine 605 (for Fru-6P isomerization activity) is an active-site residue.

In terms of assembly, homodimer.

It localises to the cytoplasm. The enzyme catalyses D-fructose 6-phosphate + L-glutamine = D-glucosamine 6-phosphate + L-glutamate. Functionally, catalyzes the first step in hexosamine metabolism, converting fructose-6P into glucosamine-6P using glutamine as a nitrogen source. This Bordetella pertussis (strain Tohama I / ATCC BAA-589 / NCTC 13251) protein is Glutamine--fructose-6-phosphate aminotransferase [isomerizing].